The primary structure comprises 85 residues: MLAWVIIASIITAGFSVALVGMNATKAQGNAAASAFESVARQPEAGDQINRMLLFALAFIETIMIFTLTVALILLFANPLLGKLS.

2 consecutive transmembrane segments (helical) span residues 1–21 and 53–73; these read MLAWVIIASIITAGFSVALVG and LLFALAFIETIMIFTLTVALI.

The protein belongs to the ATPase C chain family. F-type ATPases have 2 components, F(1) - the catalytic core - and F(0) - the membrane proton channel. F(1) has five subunits: alpha(3), beta(3), gamma(1), delta(1), epsilon(1). F(0) has three main subunits: a(1), b(2) and c(10-14). The alpha and beta chains form an alternating ring which encloses part of the gamma chain. F(1) is attached to F(0) by a central stalk formed by the gamma and epsilon chains, while a peripheral stalk is formed by the delta and b chains.

It localises to the cell inner membrane. Its function is as follows. F(1)F(0) ATP synthase produces ATP from ADP in the presence of a proton or sodium gradient. F-type ATPases consist of two structural domains, F(1) containing the extramembraneous catalytic core and F(0) containing the membrane proton channel, linked together by a central stalk and a peripheral stalk. During catalysis, ATP synthesis in the catalytic domain of F(1) is coupled via a rotary mechanism of the central stalk subunits to proton translocation. In terms of biological role, key component of the F(0) channel; it plays a direct role in translocation across the membrane. A homomeric c-ring of between 10-14 subunits forms the central stalk rotor element with the F(1) delta and epsilon subunits. The protein is ATP synthase subunit c of Dictyoglomus turgidum (strain DSM 6724 / Z-1310).